Here is a 676-residue protein sequence, read N- to C-terminus: tRNA 5-methylaminomethyl-2-thiouridine biosynthesis bifunctional protein MnmC (676 aa).

The tRNA (mnm(5)s(2)U34)-methyltransferase stretch occupies residues 1-241 (MFTVTPAKIY…KRECLCGIKN (241 aa)). Residues 268 to 676 (IGGGIASLFT…RKLLKGTEIK (409 aa)) are FAD-dependent cmnm(5)s(2)U34 oxidoreductase.

In the N-terminal section; belongs to the methyltransferase superfamily. tRNA (mnm(5)s(2)U34)-methyltransferase family. The protein in the C-terminal section; belongs to the DAO family. FAD is required as a cofactor.

The protein resides in the cytoplasm. The enzyme catalyses 5-aminomethyl-2-thiouridine(34) in tRNA + S-adenosyl-L-methionine = 5-methylaminomethyl-2-thiouridine(34) in tRNA + S-adenosyl-L-homocysteine + H(+). Functionally, catalyzes the last two steps in the biosynthesis of 5-methylaminomethyl-2-thiouridine (mnm(5)s(2)U) at the wobble position (U34) in tRNA. Catalyzes the FAD-dependent demodification of cmnm(5)s(2)U34 to nm(5)s(2)U34, followed by the transfer of a methyl group from S-adenosyl-L-methionine to nm(5)s(2)U34, to form mnm(5)s(2)U34. The protein is tRNA 5-methylaminomethyl-2-thiouridine biosynthesis bifunctional protein MnmC of Histophilus somni (strain 2336) (Haemophilus somnus).